The primary structure comprises 375 residues: Protein MGF 360-5L (375 aa).

This sequence belongs to the asfivirus MGF 360 family.

Functionally, plays a role in virus cell tropism, and may be required for efficient virus replication in macrophages. This chain is Protein MGF 360-5L, found in African swine fever virus (isolate Portugal/Lis 57/1957) (ASFV).